Reading from the N-terminus, the 282-residue chain is Ribosomal RNA small subunit methyltransferase A (282 aa).

The interval 1-21 (MPDFPKEHATPMSNRPPAHQA) is disordered. S-adenosyl-L-methionine-binding residues include Asn28, Leu30, Gly55, Glu76, Asp101, and Asn126.

It belongs to the class I-like SAM-binding methyltransferase superfamily. rRNA adenine N(6)-methyltransferase family. RsmA subfamily.

It is found in the cytoplasm. It carries out the reaction adenosine(1518)/adenosine(1519) in 16S rRNA + 4 S-adenosyl-L-methionine = N(6)-dimethyladenosine(1518)/N(6)-dimethyladenosine(1519) in 16S rRNA + 4 S-adenosyl-L-homocysteine + 4 H(+). In terms of biological role, specifically dimethylates two adjacent adenosines (A1518 and A1519) in the loop of a conserved hairpin near the 3'-end of 16S rRNA in the 30S particle. May play a critical role in biogenesis of 30S subunits. This is Ribosomal RNA small subunit methyltransferase A from Chromohalobacter salexigens (strain ATCC BAA-138 / DSM 3043 / CIP 106854 / NCIMB 13768 / 1H11).